The chain runs to 256 residues: Protein FixA (256 aa).

Belongs to the ETF beta-subunit/FixA family. Heterodimer of FixA and FixB.

It functions in the pathway amine and polyamine metabolism; carnitine metabolism. In terms of biological role, required for anaerobic carnitine reduction. May bring reductant to CaiA. This Salmonella agona (strain SL483) protein is Protein FixA.